Reading from the N-terminus, the 59-residue chain is Large ribosomal subunit protein bL32 (59 aa).

The segment at methionine 1–aspartate 59 is disordered. Composition is skewed to basic residues over residues serine 9–histidine 19 and arginine 49–aspartate 59.

Belongs to the bacterial ribosomal protein bL32 family.

This chain is Large ribosomal subunit protein bL32, found in Cupriavidus necator (strain ATCC 17699 / DSM 428 / KCTC 22496 / NCIMB 10442 / H16 / Stanier 337) (Ralstonia eutropha).